Reading from the N-terminus, the 81-residue chain is Omega-conotoxin-like Vc6.4 (81 aa).

The first 22 residues, 1-22 (MKLTCVMIVAVLFLTANTFVTA), serve as a signal peptide directing secretion. Residues 23–51 (VPHSSNVLENLYLKARHEMENPEASKLNT) constitute a propeptide that is removed on maturation. 3 disulfides stabilise this stretch: C55/C72, C62/C76, and C71/C80.

It belongs to the conotoxin O1 superfamily. Expressed by the venom duct.

The protein resides in the secreted. Omega-conotoxins act at presynaptic membranes, they bind and block voltage-gated calcium channels. Act on high voltage-activated (HVA) calcium currents in molluscan neurons. In Conus victoriae (Queen Victoria cone), this protein is Omega-conotoxin-like Vc6.4.